A 464-amino-acid chain; its full sequence is Chromosomal replication initiator protein DnaA (464 aa).

A domain I, interacts with DnaA modulators region spans residues 1–82 (MKNAAELWHN…GSRLDIQFIE (82 aa)). Positions 82 to 125 (EEGQAKHMLDRQNEEVEVMEVAPAKTKAQKTPKSSDELVMSELG) are domain II. Residues 126-342 (QLNEKYTFDT…GALTRVIAYA (217 aa)) form a domain III, AAA+ region region. ATP contacts are provided by Gly170, Gly172, Lys173, and Thr174. The tract at residues 343 to 464 (NLVGRTIDPN…EQIKHELKHS (122 aa)) is domain IV, binds dsDNA.

This sequence belongs to the DnaA family. As to quaternary structure, oligomerizes as a right-handed, spiral filament on DNA at oriC.

The protein resides in the cytoplasm. Functionally, plays an essential role in the initiation and regulation of chromosomal replication. ATP-DnaA binds to the origin of replication (oriC) to initiate formation of the DNA replication initiation complex once per cell cycle. Binds the DnaA box (a 9 base pair repeat at the origin) and separates the double-stranded (ds)DNA. Forms a right-handed helical filament on oriC DNA; dsDNA binds to the exterior of the filament while single-stranded (ss)DNA is stabiized in the filament's interior. The ATP-DnaA-oriC complex binds and stabilizes one strand of the AT-rich DNA unwinding element (DUE), permitting loading of DNA polymerase. After initiation quickly degrades to an ADP-DnaA complex that is not apt for DNA replication. Binds acidic phospholipids. The sequence is that of Chromosomal replication initiator protein DnaA from Exiguobacterium sibiricum (strain DSM 17290 / CCUG 55495 / CIP 109462 / JCM 13490 / 255-15).